The primary structure comprises 1835 residues: Protein TIC 214 (1835 aa).

Helical transmembrane passes span 25 to 45 (VGLYYGFLTTFSIGPSYLFLL), 64 to 84 (FITGQLMMFISIYYAPLHLAL), 87 to 107 (PHTITVLVLPYLLFHFFWNNH), 124 to 144 (LSIQCVFLNNLIFQLFNHFIL), 172 to 192 (VGWLIGHIFFMKWVGLVLFWI), and 221 to 241 (IFSILLFITCVYYLGRIPSPI). The span at 246–258 (LKETSETEERGES) shows a compositional bias: basic and acidic residues. 3 disordered regions span residues 246–304 (LKET…DGNQ), 735–759 (EFKTSDSEEKEAKEKEKTKEEKKEE), and 1535–1578 (NRNQ…KRQS). Over residues 259–268 (AEETDVEIET) the composition is skewed to acidic residues. The segment covering 1553 to 1569 (PRNRQKDLEKDYAESDI) has biased composition (basic and acidic residues).

This sequence belongs to the TIC214 family. Part of the Tic complex.

Its subcellular location is the plastid. It is found in the chloroplast inner membrane. Functionally, involved in protein precursor import into chloroplasts. May be part of an intermediate translocation complex acting as a protein-conducting channel at the inner envelope. The chain is Protein TIC 214 from Liriodendron tulipifera (Tuliptree).